The following is a 310-amino-acid chain: Methionyl-tRNA formyltransferase (310 aa).

Residue 110–113 (SVLP) participates in (6S)-5,6,7,8-tetrahydrofolate binding.

Belongs to the Fmt family.

The catalysed reaction is L-methionyl-tRNA(fMet) + (6R)-10-formyltetrahydrofolate = N-formyl-L-methionyl-tRNA(fMet) + (6S)-5,6,7,8-tetrahydrofolate + H(+). Functionally, attaches a formyl group to the free amino group of methionyl-tRNA(fMet). The formyl group appears to play a dual role in the initiator identity of N-formylmethionyl-tRNA by promoting its recognition by IF2 and preventing the misappropriation of this tRNA by the elongation apparatus. This chain is Methionyl-tRNA formyltransferase, found in Mycolicibacterium vanbaalenii (strain DSM 7251 / JCM 13017 / BCRC 16820 / KCTC 9966 / NRRL B-24157 / PYR-1) (Mycobacterium vanbaalenii).